The primary structure comprises 1399 residues: DNA-directed RNA polymerase subunit beta' (1399 aa).

Residues cysteine 70, cysteine 72, cysteine 85, and cysteine 88 each contribute to the Zn(2+) site. Positions 460, 462, and 464 each coordinate Mg(2+). The Zn(2+) site is built by cysteine 814, cysteine 888, cysteine 895, and cysteine 898.

It belongs to the RNA polymerase beta' chain family. The RNAP catalytic core consists of 2 alpha, 1 beta, 1 beta' and 1 omega subunit. When a sigma factor is associated with the core the holoenzyme is formed, which can initiate transcription. Mg(2+) serves as cofactor. Requires Zn(2+) as cofactor.

It carries out the reaction RNA(n) + a ribonucleoside 5'-triphosphate = RNA(n+1) + diphosphate. In terms of biological role, DNA-dependent RNA polymerase catalyzes the transcription of DNA into RNA using the four ribonucleoside triphosphates as substrates. The chain is DNA-directed RNA polymerase subunit beta' from Pseudomonas fluorescens (strain Pf0-1).